The chain runs to 578 residues: Putative multidrug export ATP-binding/permease protein SA1683 (578 aa).

Residues 1–15 are Cytoplasmic-facing; sequence MIKRYLQFVKPYKYR. A helical transmembrane segment spans residues 16–36; it reads IFATIIVGIIKFGIPMLIPLL. Residues 16-306 enclose the ABC transmembrane type-1 domain; that stretch reads IFATIIVGII…LVASFTTLTQ (291 aa). The Extracellular portion of the chain corresponds to 37-59; that stretch reads IKYAIDGVINNHALTTDEKVHHL. A helical transmembrane segment spans residues 60–80; sequence TIAIGIALFIFVIVRPPIEFI. The Cytoplasmic portion of the chain corresponds to 81-138; the sequence is RQYLAQWTSNKILYDIRKKLYNHLQALSARFYANNQVGQVISRVINDVEQTKDFILTG. Residues 139–159 traverse the membrane as a helical segment; it reads LMNIWLDCITIIIALSIMFFL. Over 160-162 the chain is Extracellular; sequence DVK. A helical transmembrane segment spans residues 163-183; sequence LTLAALFIFPFYILTVYVFFG. The Cytoplasmic portion of the chain corresponds to 184 to 244; it reads RLRKLTRERS…TRALKHTRWN (61 aa). The chain crosses the membrane as a helical span at residues 245 to 263; the sequence is AYSFAAINTVTDIGPIIVI. Topologically, residues 264–269 are extracellular; it reads GVGAYL. A helical membrane pass occupies residues 270 to 287; it reads AISGSITVGTLAAFVGYL. Residues 288–578 are Cytoplasmic-facing; that stretch reads ELLFGPLRRL…YEHLYSIQNL (291 aa). An ABC transporter domain is found at 340–575; sequence IDIDHVSFQY…QGAYEHLYSI (236 aa). 374–381 serves as a coordination point for ATP; sequence GMSGGGKS.

Belongs to the ABC transporter superfamily. Homodimer.

Its subcellular location is the cell membrane. In terms of biological role, may be involved in multidrug export. Transmembrane domains (TMD) form a pore in the cell membrane and the ATP-binding domain (NBD) is responsible for energy generation. This Staphylococcus aureus (strain N315) protein is Putative multidrug export ATP-binding/permease protein SA1683.